A 206-amino-acid polypeptide reads, in one-letter code: Small ribosomal subunit protein uS4 (206 aa).

Residues 15-46 (MGENIWGRPKSPVNKREYGPGQHGQRRKNKLS) are disordered. The 64-residue stretch at 94 to 157 (RRLDAIVYRA…RQLAIVLEAT (64 aa)) folds into the S4 RNA-binding domain.

The protein belongs to the universal ribosomal protein uS4 family. Part of the 30S ribosomal subunit. Contacts protein S5. The interaction surface between S4 and S5 is involved in control of translational fidelity.

One of the primary rRNA binding proteins, it binds directly to 16S rRNA where it nucleates assembly of the body of the 30S subunit. Functionally, with S5 and S12 plays an important role in translational accuracy. The polypeptide is Small ribosomal subunit protein uS4 (Cereibacter sphaeroides (strain ATCC 17025 / ATH 2.4.3) (Rhodobacter sphaeroides)).